We begin with the raw amino-acid sequence, 318 residues long: DNA repair nuclease/redox regulator APEX1 (318 aa).

The segment at Met1 to Asn33 is necessary for interaction with YBX1, binding to RNA, association together with NPM1 to rRNA, endoribonuclease activity on abasic RNA and localization in the nucleoli. The interval Met1–Ala60 is disordered. 2 positions are modified to N6-acetyllysine; by EP300: Lys6 and Lys7. The Nuclear localization signal (NLS) motif lies at Gly8–Asp13. Residues Glu16 to Ala38 are compositionally biased toward basic and acidic residues. Residues Ala23 to Asn33 are necessary for interaction with NPM1 and for efficient rRNA binding. Residues Lys27, Lys31, Lys32, and Lys35 each carry the N6-acetyllysine modification. Ser54 bears the Phosphoserine mark. Positions Ile64–Gly80 match the Nuclear export signal (NES) motif. At Cys65 the chain carries S-nitrosocysteine; alternate. A disulfide bond links Cys65 and Cys93. Residue Asp70 coordinates Mg(2+). An S-nitrosocysteine; alternate modification is found at Cys93. Position 96 (Glu96) interacts with Mg(2+). Tyr171 is a catalytic residue. An N6-acetyllysine modification is found at Lys197. Positions 210 and 212 each coordinate Mg(2+). Residue Asp210 is the Proton donor/acceptor of the active site. Thr233 bears the Phosphothreonine; by CDK5 mark. The interval His289 to Leu318 is mitochondrial targeting sequence (MTS). Asp308 contributes to the Mg(2+) binding site. The residue at position 310 (Cys310) is an S-nitrosocysteine.

Belongs to the DNA repair enzymes AP/ExoA family. In terms of assembly, monomer. Homodimer; disulfide-linked. Component of the SET complex, composed of at least APEX1, SET, ANP32A, HMGB2, NME1 and TREX1. Associates with the dimer XRCC5/XRCC6 in a DNA-dependent manner. Interacts with SIRT1; the interaction is increased in the context of genotoxic stress. Interacts with HDAC1, HDAC2 and HDAC3; the interactions are not dependent on the APEX1 acetylation status. Interacts with XRCC1; the interaction is induced by SIRT1 and increased with the APEX1 acetylated form. Interacts with NPM1 (via N-terminal domain); the interaction is RNA-dependent and decreases in hydrogen peroxide-damaged cells. Interacts (via N-terminus) with YBX1 (via C-terminus); the interaction is increased in presence of APEX1 acetylated at Lys-6 and Lys-7. Interacts with HNRNPL; the interaction is DNA-dependent. Interacts (via N-terminus) with KPNA1 and KPNA2. Interacts with TXN; the interaction stimulates the FOS/JUN AP-1 complex DNA-binding activity in a redox-dependent manner. Interacts with GZMA, KRT8, MDM2, POLB, PRDX6, PRPF19, RPLP0, TOMM20 and WDR77. Binds to CDK5. Mg(2+) is required as a cofactor. Requires Mn(2+) as cofactor. In terms of processing, phosphorylated. Phosphorylation by kinase PKC or casein kinase CK2 results in enhanced redox activity that stimulates binding of the FOS/JUN AP-1 complex to its cognate binding site. AP-endodeoxyribonuclease activity is not affected by CK2-mediated phosphorylation. Phosphorylation of Thr-233 by CDK5 in response to MPP(+)/MPTP (1-methyl-4-phenylpyridinium) reduces AP-endodeoxyribonuclease activity resulting in accumulation of DNA damage and contributing to neuronal death. Acetylated on Lys-6 and Lys-7. Acetylation is increased by the transcriptional coactivator EP300 acetyltransferase, genotoxic agents like H(2)O(2) and methyl methanesulfonate (MMS). Acetylation increases its binding affinity to the negative calcium response element (nCaRE) DNA promoter. The acetylated form induces a stronger binding of YBX1 to the Y-box sequence in the MDR1 promoter than the unacetylated form. Deacetylated on lysines. Lys-6 and Lys-7 are deacetylated by SIRT1. Post-translationally, cleaved at Lys-31 by granzyme A to create the mitochondrial form; leading in reduction of binding to DNA, AP endodeoxyribonuclease activity, redox activation of transcription factors and to enhanced cell death. Cleaved by granzyme K; leading to intracellular ROS accumulation and enhanced cell death after oxidative stress. In terms of processing, cys-69 and Cys-93 are nitrosylated in response to nitric oxide (NO) and lead to the exposure of the nuclear export signal (NES). Ubiquitinated by MDM2; leading to translocation to the cytoplasm and proteasomal degradation.

The protein localises to the nucleus. The protein resides in the nucleolus. Its subcellular location is the nucleus speckle. It is found in the endoplasmic reticulum. It localises to the cytoplasm. The protein localises to the mitochondrion. It catalyses the reaction a deoxyribonucleotide-2'-deoxyribose-5'-monophosphate-DNA + H2O = a 5'-end 2'-deoxyribose-5'-monophosphate-DNA + a 3'-end 2'-deoxyribonucleotide-DNA + H(+). The enzyme catalyses Exonucleolytic cleavage in the 3'- to 5'-direction to yield nucleoside 5'-phosphates.. The catalysed reaction is a 3'-end 2'-deoxyribonucleotide-3'-phosphoglycolate-DNA + H2O = 2-phosphoglycolate + a 3'-end 2'-deoxyribonucleotide-DNA + H(+). It carries out the reaction a 3'-end 2'-deoxyribonucleotide-8-oxoguanine-DNA + H2O = 8-oxo-dGMP + a 3'-end 2'-deoxyribonucleotide-DNA + H(+). Its activity is regulated as follows. NPM1 stimulates endodeoxyribonuclease activity on double-stranded DNA with AP sites, but inhibits endoribonuclease activity on single-stranded RNA containing AP sites. Multifunctional protein that plays a central role in the cellular response to oxidative stress. The two major activities of APEX1 are DNA repair and redox regulation of transcriptional factors. Functions as an apurinic/apyrimidinic (AP) endodeoxyribonuclease in the base excision repair (BER) pathway of DNA lesions induced by oxidative and alkylating agents. Initiates repair of AP sites in DNA by catalyzing hydrolytic incision of the phosphodiester backbone immediately adjacent to the damage, generating a single-strand break with 5'-deoxyribose phosphate and 3'-hydroxyl ends. Also incises at AP sites in the DNA strand of DNA/RNA hybrids, single-stranded DNA regions of R-loop structures, and single-stranded RNA molecules. Operates at switch sites of immunoglobulin (Ig) constant regions where it mediates Ig isotype class switch recombination. Processes AP sites induced by successive action of AICDA and UNG. Generates staggered nicks in opposite DNA strands resulting in the formation of double-strand DNA breaks that are finally resolved via non-homologous end joining repair pathway. Has 3'-5' exodeoxyribonuclease activity on mismatched deoxyribonucleotides at the 3' termini of nicked or gapped DNA molecules during short-patch BER. Possesses DNA 3' phosphodiesterase activity capable of removing lesions (such as phosphoglycolate and 8-oxoguanine) blocking the 3' side of DNA strand breaks. Also acts as an endoribonuclease involved in the control of single-stranded RNA metabolism. Plays a role in regulating MYC mRNA turnover by preferentially cleaving in between UA and CA dinucleotides of the MYC coding region determinant (CRD). In association with NMD1, plays a role in the rRNA quality control process during cell cycle progression. Acts as a loading factor for POLB onto non-incised AP sites in DNA and stimulates the 5'-terminal deoxyribose 5'-phosphate (dRp) excision activity of POLB. Exerts reversible nuclear redox activity to regulate DNA binding affinity and transcriptional activity of transcriptional factors by controlling the redox status of their DNA-binding domain, such as the FOS/JUN AP-1 complex after exposure to IR. Involved in calcium-dependent down-regulation of parathyroid hormone (PTH) expression by binding to negative calcium response elements (nCaREs). Together with HNRNPL or the dimer XRCC5/XRCC6, associates with nCaRE, acting as an activator of transcriptional repression. May also play a role in the epigenetic regulation of gene expression by participating in DNA demethylation. Stimulates the YBX1-mediated MDR1 promoter activity, when acetylated at Lys-6 and Lys-7, leading to drug resistance. Plays a role in protection from granzyme-mediated cellular repair leading to cell death. Binds DNA and RNA. Associates, together with YBX1, on the MDR1 promoter. Together with NPM1, associates with rRNA. The chain is DNA repair nuclease/redox regulator APEX1 (APEX1) from Pan paniscus (Pygmy chimpanzee).